A 168-amino-acid polypeptide reads, in one-letter code: CDP-archaeol synthase (168 aa).

A run of 5 helical transmembrane segments spans residues 4 to 24 (IFEAFWYILPAYFANSSPVVL), 51 to 71 (GFFGGITVGTVVGTIQHLMFP), 81 to 101 (VGVAFLLSLGALVGDLIGSFI), 112 to 132 (PAVGLDQWGFLISALCFAYPL), and 138 to 158 (GEVLFLLVVTPVIHWLANVFA).

The protein belongs to the CDP-archaeol synthase family. It depends on Mg(2+) as a cofactor.

The protein resides in the cell membrane. It carries out the reaction 2,3-bis-O-(geranylgeranyl)-sn-glycerol 1-phosphate + CTP + H(+) = CDP-2,3-bis-O-(geranylgeranyl)-sn-glycerol + diphosphate. It functions in the pathway membrane lipid metabolism; glycerophospholipid metabolism. In terms of biological role, catalyzes the formation of CDP-2,3-bis-(O-geranylgeranyl)-sn-glycerol (CDP-archaeol) from 2,3-bis-(O-geranylgeranyl)-sn-glycerol 1-phosphate (DGGGP) and CTP. This reaction is the third ether-bond-formation step in the biosynthesis of archaeal membrane lipids. The protein is CDP-archaeol synthase of Pyrococcus abyssi (strain GE5 / Orsay).